The chain runs to 369 residues: Protein-glutamate methylesterase/protein-glutamine glutaminase (369 aa).

The Response regulatory domain occupies 4–121 (KVLVVDDSSF…ARNRDEAVSL (118 aa)). Asp-55 carries the 4-aspartylphosphate modification. Residues 146-171 (ATSSARPLASRTAAPAASAPARPATT) are compositionally biased toward low complexity. The disordered stretch occupies residues 146-175 (ATSSARPLASRTAAPAASAPARPATTKFRA). Residues 176–369 (SGKKYQLTAI…ERMLVEVGLA (194 aa)) enclose the CheB-type methylesterase domain. Residues Ser-188, His-215, and Asp-311 contribute to the active site.

Belongs to the CheB family. Post-translationally, phosphorylated by CheA. Phosphorylation of the N-terminal regulatory domain activates the methylesterase activity.

It is found in the cytoplasm. It catalyses the reaction [protein]-L-glutamate 5-O-methyl ester + H2O = L-glutamyl-[protein] + methanol + H(+). The enzyme catalyses L-glutaminyl-[protein] + H2O = L-glutamyl-[protein] + NH4(+). In terms of biological role, involved in chemotaxis. Part of a chemotaxis signal transduction system that modulates chemotaxis in response to various stimuli. Catalyzes the demethylation of specific methylglutamate residues introduced into the chemoreceptors (methyl-accepting chemotaxis proteins or MCP) by CheR. Also mediates the irreversible deamidation of specific glutamine residues to glutamic acid. This chain is Protein-glutamate methylesterase/protein-glutamine glutaminase, found in Vibrio parahaemolyticus serotype O3:K6 (strain RIMD 2210633).